The sequence spans 207 residues: Putative 3-methyladenine DNA glycosylase (207 aa).

The protein belongs to the DNA glycosylase MPG family.

The sequence is that of Putative 3-methyladenine DNA glycosylase from Burkholderia lata (strain ATCC 17760 / DSM 23089 / LMG 22485 / NCIMB 9086 / R18194 / 383).